The primary structure comprises 830 residues: Nucleolar complex-associated protein 3 (830 aa).

Disordered stretches follow at residues 1-22 (MGKN…DVAE), 67-86 (KYEE…GNGE), 112-169 (KSKL…EETP), 391-436 (GKPN…KIRD), and 802-830 (LQSE…KKQI). Coiled coils occupy residues 61 to 81 (VMTV…LQEE) and 111 to 156 (KKSK…HEKD). The segment covering 67-84 (KYEEERSKRKTLQEEKGN) has biased composition (basic and acidic residues). The span at 118–129 (AETDEAEKDVLE) shows a compositional bias: acidic residues. Residues 130–140 (DEHVLNKSQRR) show a composition bias toward basic and acidic residues. Positions 138–145 (QRREKAKK) match the Nuclear localization signal 1 motif. A compositionally biased stretch (basic residues) spans 141-150 (EKAKKSKREA). A compositionally biased stretch (acidic residues) spans 159 to 168 (DEILQEEEET). The span at 391–400 (GKPNKEDEHN) shows a compositional bias: basic and acidic residues. Positions 400–429 (NKKYKKNNKRKTQEEQNQVQENERKKSKKD) form a coiled coil. The Nuclear localization signal 2 motif lies at 408–415 (KRKTQEEQ). Residues 420–436 (ENERKKSKKDMMSKIRD) are compositionally biased toward basic and acidic residues. The short motif at 806–813 (EKKPLKKQ) is the Nuclear localization signal 3 element. Over residues 817–830 (VKKKLKNPKSKKQI) the composition is skewed to basic residues.

It belongs to the CBF/MAK21 family. In terms of assembly, component of nucleolar complexes. Interacts with RBL and NOC2 in both the nucleolus and nucleoplasm.

The protein resides in the nucleus. It is found in the nucleolus. The protein localises to the nucleoplasm. May be required for synthesis of 60S ribosomal subunits and the transport of pre-ribosomes from the nucleoplasm to the cytoplasm. Also required for initiation of DNA replication. This chain is Nucleolar complex-associated protein 3, found in Arabidopsis thaliana (Mouse-ear cress).